A 404-amino-acid chain; its full sequence is MAESVERLQQRVEELERELAQERSRRALGSGDGGGGRARIEKMSSEVVDSNPYSRLMALKRMGIVSDYEKIRTFTVAIVGVGGVGSVTAEMLTRCGIGKLLLFDYDKVELANMNRLFFQPHQAGLSKVQAAEHTLRNINPDVLFEVHNYNITTVENFEHFMNRISNGGLEEGKPVDLVLSCVDNFEARMTINTACNELGQTWMESGVSENAVSGHIQLIIPGESACFACAPPLVVAANIDEKTLKREGVCAASLPTTMGVVAGILVQNVLKFLLNFGTVSFYLGYNAMQDFFPTMSMKPNPQCDDRNCRKQQKEYKKKVAALPKQEVIQEEGEIIHEDNEWGIELVSEISEEELKKSSGPIPDLPEGIIVAYTVPQKQEDSVPEVTVEDSGESLEDLMAKMKNI.

S45 is modified (phosphoserine). Residues G83, D104, K127, N150, and N184 each coordinate ATP. 2 residues coordinate Zn(2+): C226 and C229. The Glycyl thioester intermediate role is filled by C250. Zn(2+)-binding residues include C303 and C308. The UFM1-interacting sequence (UIS) motif lies at 334-346; that stretch reads IIHEDNEWGIELV. The segment at 347–377 is linker; that stretch reads SEISEEELKKSSGPIPDLPEGIIVAYTVPQK. Phosphoserine occurs at positions 358 and 393. The UFC1-binding sequence (UFC) signature appears at 389-404; sequence DSGESLEDLMAKMKNI.

Belongs to the ubiquitin-activating E1 family. UBA5 subfamily. As to quaternary structure, homodimer; homodimerization is required for UFM1 activation. Interacts (via UIS motif) with UFM1; binds UFM1 via a trans-binding mechanism in which UFM1 interacts with distinct sites in both subunits of the UBA5 homodimer. Interacts (via C-terminus) with UFC1. Interacts (via UIS motif) with GABARAPL2 and, with lower affinity, with GABARAP and GABARAPL1.

It localises to the cytoplasm. The protein localises to the nucleus. The protein resides in the endoplasmic reticulum membrane. It is found in the golgi apparatus. E1-like enzyme which specifically catalyzes the first step in ufmylation. Activates UFM1 by first adenylating its C-terminal glycine residue with ATP, and thereafter linking this residue to the side chain of a cysteine residue in E1, yielding a UFM1-E1 thioester and free AMP. Activates UFM1 via a trans-binding mechanism, in which UFM1 interacts with distinct sites in both subunits of the UBA5 homodimer. Trans-binding also promotes stabilization of the UBA5 homodimer, and enhances ATP-binding. Transfer of UFM1 from UBA5 to the E2-like enzyme UFC1 also takes place using a trans mechanism. Ufmylation plays a key role in various processes, such as ribosome recycling, response to DNA damage, interferon response or reticulophagy (also called ER-phagy). Ufmylation is essential for erythroid differentiation of both megakaryocytes and erythrocytes. The sequence is that of Ubiquitin-like modifier-activating enzyme 5 from Bos taurus (Bovine).